A 164-amino-acid polypeptide reads, in one-letter code: UPF0304 protein KPK_1463 (164 aa).

It belongs to the UPF0304 family.

The protein is UPF0304 protein KPK_1463 of Klebsiella pneumoniae (strain 342).